Consider the following 132-residue polypeptide: Fluoride-specific ion channel FluC (132 aa).

The next 4 helical transmembrane spans lie at 5–25, 32–52, 70–90, and 105–125; these read LYIA…SGLV, TFPW…GFFA, FVMT…LQTL, and VVGS…AAVG. Residues Gly-77 and Thr-80 each coordinate Na(+).

The protein belongs to the fluoride channel Fluc/FEX (TC 1.A.43) family.

It localises to the cell inner membrane. It carries out the reaction fluoride(in) = fluoride(out). With respect to regulation, na(+) is not transported, but it plays an essential structural role and its presence is essential for fluoride channel function. Functionally, fluoride-specific ion channel. Important for reducing fluoride concentration in the cell, thus reducing its toxicity. This Opitutus terrae (strain DSM 11246 / JCM 15787 / PB90-1) protein is Fluoride-specific ion channel FluC.